Here is a 297-residue protein sequence, read N- to C-terminus: Protoheme IX farnesyltransferase 1 (297 aa).

Helical transmembrane passes span 23-43, 45-65, 93-113, 117-137, 145-165, 171-191, 216-236, 241-261, and 277-297; these read VVVL…RAGV, WSVL…AAVV, LPAL…LLVF, LTAW…TGFL, IVIG…AVSG, PLLL…ALAI, LHIL…YAIH, LYLA…WVLY, and IGYL…LLSL.

This sequence belongs to the UbiA prenyltransferase family. Protoheme IX farnesyltransferase subfamily.

The protein resides in the cell inner membrane. It carries out the reaction heme b + (2E,6E)-farnesyl diphosphate + H2O = Fe(II)-heme o + diphosphate. Its pathway is porphyrin-containing compound metabolism; heme O biosynthesis; heme O from protoheme: step 1/1. Its function is as follows. Converts heme B (protoheme IX) to heme O by substitution of the vinyl group on carbon 2 of heme B porphyrin ring with a hydroxyethyl farnesyl side group. The polypeptide is Protoheme IX farnesyltransferase 1 (Pseudomonas putida (strain ATCC 700007 / DSM 6899 / JCM 31910 / BCRC 17059 / LMG 24140 / F1)).